The chain runs to 148 residues: Lipoprotein MlpA (148 aa).

The signal sequence occupies residues 1-17 (MKIINILFCLFLLLLNS). C18 is lipidated: N-palmitoyl cysteine. C18 is lipidated: S-diacylglycerol cysteine. Residues 26 to 58 (LKNNAQQTKSRGKRDLTQKEATPEKPKSKEELL) form a disordered region. The segment covering 38-58 (KRDLTQKEATPEKPKSKEELL) has biased composition (basic and acidic residues).

It belongs to the Multicopy lipoprotein (Mlp) family.

It is found in the cell outer membrane. In terms of biological role, an outer membrane protein that may participate in pathogenesis. Some human Lyme disease patients have antibodies against this protein. The Mlp proteins probably undergo intragenic recombination, generating new alleles. The protein is Lipoprotein MlpA (mlpA) of Borreliella burgdorferi (strain ATCC 35210 / DSM 4680 / CIP 102532 / B31) (Borrelia burgdorferi).